The chain runs to 260 residues: Circadian clock-controlled protein daywake (260 aa).

The signal sequence occupies residues 1 to 25 (MQLTGASMFLVWVGLLSWVSCRVDA).

It belongs to the TO family. In terms of tissue distribution, epidermis of newly eclosed adults.

In terms of biological role, component of the circadian clock or downstream effector of clock function. Required for suppressing daytime sleep (siesta) under ambient environmental temperatures. Part of a heat avoidance mechanism that modulates daytime sleep behavior under different environmental temperatures to minimize the risk of heat exposure. Under cooler ambient temperatures, suppresses daytime sleep (siesta) and thus allows for longer periods of daytime activity. This Drosophila melanogaster (Fruit fly) protein is Circadian clock-controlled protein daywake.